The chain runs to 466 residues: Phage-like element PBSX protein XkdK (466 aa).

Belongs to the myoviridae tail sheath protein family.

The polypeptide is Phage-like element PBSX protein XkdK (xkdK) (Bacillus subtilis (strain 168)).